A 1399-amino-acid chain; its full sequence is DNA-directed RNA polymerase subunit beta' (1399 aa).

Positions 70, 72, 85, and 88 each coordinate Zn(2+). D460, D462, and D464 together coordinate Mg(2+). 4 residues coordinate Zn(2+): C814, C888, C895, and C898.

This sequence belongs to the RNA polymerase beta' chain family. As to quaternary structure, the RNAP catalytic core consists of 2 alpha, 1 beta, 1 beta' and 1 omega subunit. When a sigma factor is associated with the core the holoenzyme is formed, which can initiate transcription. Mg(2+) serves as cofactor. Zn(2+) is required as a cofactor.

The enzyme catalyses RNA(n) + a ribonucleoside 5'-triphosphate = RNA(n+1) + diphosphate. Its function is as follows. DNA-dependent RNA polymerase catalyzes the transcription of DNA into RNA using the four ribonucleoside triphosphates as substrates. The protein is DNA-directed RNA polymerase subunit beta' of Pseudomonas fluorescens (strain Pf0-1).